An 812-amino-acid polypeptide reads, in one-letter code: Chromosome alignment-maintaining phosphoprotein 1 (812 aa).

Position 1 is an N-acetylmethionine (Met1). A compositionally biased stretch (basic and acidic residues) spans 86 to 105 (ASPDKWNDKPKNQLNKETDP). Disordered regions lie at residues 86-124 (ASPD…SAEP) and 136-546 (KLGS…PEAR). Phosphoserine occurs at positions 87, 108, 173, 184, 204, 214, and 217. The segment covering 202 to 213 (VPSPEPQKPAPV) has biased composition (pro residues). Polar residues predominate over residues 220-233 (ATLSNPKPQKQSHF). A phosphoserine mark is found at Ser244, Ser247, Ser253, Ser264, Ser275, Ser282, Ser286, Ser297, Ser308, Ser319, Ser344, Ser355, Ser376, Ser382, and Ser386. The segment at 271 to 490 (ARTTSPEPRK…KSSFFIEPQK (220 aa)) is mediates interaction with MAD2L2. A compositionally biased stretch (pro residues) spans 284-297 (SESPEPWKPFPAVS). Residues 336–361 (PAKPAPSVSPGPWKPIPSVSPGPWKP) are compositionally biased toward pro residues. The span at 363-392 (PSVSSASWKSSSVSPSSWKSPPASPESWKS) shows a compositional bias: low complexity. Thr403 carries the phosphothreonine modification. Phosphoserine is present on residues Ser405, Ser416, Ser427, Ser432, Ser436, Ser443, Ser445, and Ser452. A mediates localization to the spindle and the kinetochore and is required for the attachment of spindle microtubules to the kinetochore region spans residues 451–590 (LSPDQRKTSP…ELQIDAIDDQ (140 aa)). Residue Thr458 is modified to Phosphothreonine. Ser459, Ser462, Ser472, and Ser476 each carry phosphoserine. Lys490 carries the post-translational modification N6-acetyllysine; alternate. Lys490 participates in a covalent cross-link: Glycyl lysine isopeptide (Lys-Gly) (interchain with G-Cter in SUMO2); alternate. Residues 499–512 (PGPSGPSESPKAAS) show a composition bias toward low complexity. Residues Ser507, Ser512, and Ser542 each carry the phosphoserine modification. Lys565 is covalently cross-linked (Glycyl lysine isopeptide (Lys-Gly) (interchain with G-Cter in SUMO2)). Residues Ser572 and Ser603 each carry the phosphoserine modification. Residues 591–812 (KCDILVQEEL…LEPPLEEQQI (222 aa)) form a mediates localization to the chromosome and the spindle and negatively regulates chromosome alignment region. Lys606 is covalently cross-linked (Glycyl lysine isopeptide (Lys-Gly) (interchain with G-Cter in SUMO2)). Phosphoserine occurs at positions 615, 626, 627, and 632. A Glycyl lysine isopeptide (Lys-Gly) (interchain with G-Cter in SUMO2) cross-link involves residue Lys638. Residues Ser651, Ser652, and Ser653 each carry the phosphoserine modification. Residue Lys670 forms a Glycyl lysine isopeptide (Lys-Gly) (interchain with G-Cter in SUMO2) linkage. Ser675 carries the phosphoserine modification. A Glycyl lysine isopeptide (Lys-Gly) (interchain with G-Cter in SUMO2) cross-link involves residue Lys689. Ser736 is subject to Phosphoserine. A C2H2-type zinc finger spans residues 738–760 (YKCTICGKAFLLESLLKNHVAAH).

As to quaternary structure, interacts with MAD2L2. Interacts with POGZ, CBX1, CBX3 and CBX5. In terms of processing, phosphorylated by CDK1. Mitotic phosphorylation is required for the attachment of spindle microtubules to the kinetochore.

The protein localises to the nucleus. It localises to the chromosome. It is found in the centromere. Its subcellular location is the kinetochore. The protein resides in the cytoplasm. The protein localises to the cytoskeleton. It localises to the spindle. Functionally, required for proper alignment of chromosomes at metaphase and their accurate segregation during mitosis. Involved in the maintenance of spindle microtubules attachment to the kinetochore during sister chromatid biorientation. May recruit CENPE and CENPF to the kinetochore. This Homo sapiens (Human) protein is Chromosome alignment-maintaining phosphoprotein 1 (CHAMP1).